The sequence spans 686 residues: L-type lectin-domain containing receptor kinase VII.1 (686 aa).

The signal sequence occupies residues 1–20 (MKALLFLLTLFLILPNPISA). Residues 21–256 (IDFIFNGFND…SHKILAWSFS (236 aa)) form a legume-lectin like region. The Extracellular segment spans residues 21–286 (IDFIFNGFND…PKDSIVKAKW (266 aa)). Residues asparagine 29, asparagine 34, asparagine 52, asparagine 64, asparagine 111, asparagine 123, asparagine 168, asparagine 203, asparagine 224, and asparagine 259 are each glycosylated (N-linked (GlcNAc...) asparagine). A helical transmembrane segment spans residues 287-307 (FVFVLVLICFLVVALVGLVLF). Residues 308–686 (AVVRKRLERA…SWNSSILEGR (379 aa)) lie on the Cytoplasmic side of the membrane. Positions 347 to 628 (FDEKNVIGIG…VFEGDKAEIF (282 aa)) constitute a Protein kinase domain. Residues 353 to 361 (IGIGGNGKV) and lysine 376 each bind ATP. Aspartate 475 acts as the Proton acceptor in catalysis.

In the C-terminal section; belongs to the protein kinase superfamily. Ser/Thr protein kinase family. It in the N-terminal section; belongs to the leguminous lectin family.

The protein localises to the cell membrane. It catalyses the reaction L-seryl-[protein] + ATP = O-phospho-L-seryl-[protein] + ADP + H(+). It carries out the reaction L-threonyl-[protein] + ATP = O-phospho-L-threonyl-[protein] + ADP + H(+). In Arabidopsis thaliana (Mouse-ear cress), this protein is L-type lectin-domain containing receptor kinase VII.1 (LECRK71).